A 191-amino-acid chain; its full sequence is MKKQLLSALIGASLLAPMAASAADYVIDREGAHASITFKVSHLGYSYVVGRFNDFSGDFSYDAAKPTAAKVNVTVNTLSVDSNHAERDKHIRSADFLNTSKFAQATFTSTTVEDKGNGDLVINGNLTLNGVTKPLAINAHAVGEGQDPWGGYRAGFTGTTTFAMKDFGIKMDLGPASSHVELDLVVEGVRK.

The signal sequence occupies residues 1–22 (MKKQLLSALIGASLLAPMAASA).

The protein belongs to the UPF0312 family. Type 1 subfamily.

Its subcellular location is the periplasm. The polypeptide is UPF0312 protein Shew185_3055 (Shewanella baltica (strain OS185)).